A 92-amino-acid chain; its full sequence is Small ribosomal subunit protein uS19 (92 aa).

This sequence belongs to the universal ribosomal protein uS19 family.

Functionally, protein S19 forms a complex with S13 that binds strongly to the 16S ribosomal RNA. The polypeptide is Small ribosomal subunit protein uS19 (Listeria innocua serovar 6a (strain ATCC BAA-680 / CLIP 11262)).